The primary structure comprises 297 residues: Undecaprenyl-diphosphatase (297 aa).

7 consecutive transmembrane segments (helical) span residues 58–78 (PGVA…LSYF), 103–123 (AQMG…GLLI), 138–158 (LAAI…AEQL), 168–188 (LRLA…IPGV), 208–228 (AARF…LVEL), 243–263 (VLAI…AWLL), and 274–294 (FVVY…TGTL).

Belongs to the UppP family.

It localises to the cell inner membrane. The enzyme catalyses di-trans,octa-cis-undecaprenyl diphosphate + H2O = di-trans,octa-cis-undecaprenyl phosphate + phosphate + H(+). Catalyzes the dephosphorylation of undecaprenyl diphosphate (UPP). Confers resistance to bacitracin. The sequence is that of Undecaprenyl-diphosphatase from Synechococcus sp. (strain ATCC 27144 / PCC 6301 / SAUG 1402/1) (Anacystis nidulans).